The chain runs to 384 residues: 8-amino-7-oxononanoate synthase (384 aa).

Arg-21 is a binding site for substrate. Gly-108–Phe-109 contacts pyridoxal 5'-phosphate. Residue His-133 participates in substrate binding. Residues Ser-179, His-207, and Thr-233 each coordinate pyridoxal 5'-phosphate. Residue Lys-236 is modified to N6-(pyridoxal phosphate)lysine. Thr-352 is a substrate binding site.

Belongs to the class-II pyridoxal-phosphate-dependent aminotransferase family. BioF subfamily. Homodimer. Pyridoxal 5'-phosphate serves as cofactor.

The catalysed reaction is 6-carboxyhexanoyl-[ACP] + L-alanine + H(+) = (8S)-8-amino-7-oxononanoate + holo-[ACP] + CO2. Its pathway is cofactor biosynthesis; biotin biosynthesis. Functionally, catalyzes the decarboxylative condensation of pimeloyl-[acyl-carrier protein] and L-alanine to produce 8-amino-7-oxononanoate (AON), [acyl-carrier protein], and carbon dioxide. This is 8-amino-7-oxononanoate synthase from Escherichia coli O6:K15:H31 (strain 536 / UPEC).